The primary structure comprises 159 residues: Type-1 angiotensin II receptor-associated protein (159 aa).

At 1-23 (MELPAVNLKVILLGHWLLTTWGC) the chain is on the extracellular side. Residues 24-44 (IVFSGSYAWANFTILALGVWA) form a helical membrane-spanning segment. Residues 45-55 (VAQRDSIDAIS) are Cytoplasmic-facing. Residues 56–76 (MFLGGLLATIFLDIVHISIFY) traverse the membrane as a helical segment. The Extracellular portion of the chain corresponds to 77-86 (PRVSLTDTGR). A helical transmembrane segment spans residues 87-107 (FGVGMAILSLLLKPLSCCFVY). Over 108–159 (HMYRERGGELLVHTGFLGSSQDRSAYQTIDSAEAPADPFAVPEGRSQDARGY) the chain is Cytoplasmic. The interval 110 to 122 (YRERGGELLVHTG) is interaction with AGTR1. Residues Ser126 and Ser127 each carry the phosphoserine modification. Thr135 carries the phosphothreonine modification. Residues Ser138 and Ser153 each carry the phosphoserine modification. The interval 140–159 (EAPADPFAVPEGRSQDARGY) is disordered.

As to quaternary structure, interacts with RACK1, and with the C-terminal region of AGTR1. As to expression, ubiquitous but more abundant in kidney, heart, pancreas and thyroid.

The protein resides in the endoplasmic reticulum membrane. The protein localises to the golgi apparatus membrane. It localises to the cytoplasmic vesicle membrane. Appears to be a negative regulator of type-1 angiotensin II receptor-mediated signaling by regulating receptor internalization as well as mechanism of receptor desensitization such as phosphorylation. Also induces a decrease in cell proliferation and angiotensin II-stimulated transcriptional activity. This Homo sapiens (Human) protein is Type-1 angiotensin II receptor-associated protein (AGTRAP).